Reading from the N-terminus, the 160-residue chain is Phosphopantetheine adenylyltransferase (160 aa).

Residue T11 participates in substrate binding. Residues 11 to 12 (TF) and H19 each bind ATP. Residues K43, T75, and R89 each coordinate substrate. ATP-binding positions include 90–92 (GLR), E100, and 125–131 (YSFLSSS).

This sequence belongs to the bacterial CoaD family. As to quaternary structure, homohexamer. Mg(2+) serves as cofactor.

It is found in the cytoplasm. The enzyme catalyses (R)-4'-phosphopantetheine + ATP + H(+) = 3'-dephospho-CoA + diphosphate. It participates in cofactor biosynthesis; coenzyme A biosynthesis; CoA from (R)-pantothenate: step 4/5. In terms of biological role, reversibly transfers an adenylyl group from ATP to 4'-phosphopantetheine, yielding dephospho-CoA (dPCoA) and pyrophosphate. The protein is Phosphopantetheine adenylyltransferase of Listeria monocytogenes serovar 1/2a (strain ATCC BAA-679 / EGD-e).